Consider the following 117-residue polypeptide: Ribonuclease P protein component (117 aa).

The protein belongs to the RnpA family. As to quaternary structure, consists of a catalytic RNA component (M1 or rnpB) and a protein subunit.

It carries out the reaction Endonucleolytic cleavage of RNA, removing 5'-extranucleotides from tRNA precursor.. Its function is as follows. RNaseP catalyzes the removal of the 5'-leader sequence from pre-tRNA to produce the mature 5'-terminus. It can also cleave other RNA substrates such as 4.5S RNA. The protein component plays an auxiliary but essential role in vivo by binding to the 5'-leader sequence and broadening the substrate specificity of the ribozyme. The protein is Ribonuclease P protein component of Thermotoga sp. (strain RQ2).